A 345-amino-acid chain; its full sequence is Tryptophan--tRNA ligase (345 aa).

ATP contacts are provided by residues 21–23 (QPT) and 30–31 (GN). The 'HIGH' region signature appears at 22-31 (PTADSYHLGN). Aspartate 147 lines the L-tryptophan pocket. Residues 159-161 (GED), isoleucine 198, and 207-211 (KMSKS) each bind ATP. The 'KMSKS' region signature appears at 207–211 (KMSKS).

It belongs to the class-I aminoacyl-tRNA synthetase family. Homodimer.

It localises to the cytoplasm. The catalysed reaction is tRNA(Trp) + L-tryptophan + ATP = L-tryptophyl-tRNA(Trp) + AMP + diphosphate + H(+). Functionally, catalyzes the attachment of tryptophan to tRNA(Trp). This chain is Tryptophan--tRNA ligase, found in Corynebacterium glutamicum (strain ATCC 13032 / DSM 20300 / JCM 1318 / BCRC 11384 / CCUG 27702 / LMG 3730 / NBRC 12168 / NCIMB 10025 / NRRL B-2784 / 534).